We begin with the raw amino-acid sequence, 231 residues long: NADH-ubiquinone oxidoreductase chain 4 (231 aa).

The next 6 membrane-spanning stretches (helical) occupy residues 1–21, 34–54, 63–85, 89–111, 128–148, and 156–176; these read PIAG…YGII, MFLP…LTCL, IAYS…TPWG, AMTL…NTTY, ILPM…AIPP, and LLIM…LGLS.

This sequence belongs to the complex I subunit 4 family.

The protein resides in the mitochondrion membrane. It carries out the reaction a ubiquinone + NADH + 5 H(+)(in) = a ubiquinol + NAD(+) + 4 H(+)(out). Functionally, core subunit of the mitochondrial membrane respiratory chain NADH dehydrogenase (Complex I) that is believed to belong to the minimal assembly required for catalysis. Complex I functions in the transfer of electrons from NADH to the respiratory chain. The immediate electron acceptor for the enzyme is believed to be ubiquinone. The chain is NADH-ubiquinone oxidoreductase chain 4 (MT-ND4) from Gloydius intermedius (Central Asian pit viper).